A 784-amino-acid chain; its full sequence is N-alpha-acetyltransferase 35, NatC auxiliary subunit homolog (784 aa).

Disordered regions lie at residues 1-23, 320-353, and 606-630; these read MYPS…VAEP, NTLD…PPAF, and SKTQ…NKKT. The segment covering 617–630 has biased composition (basic residues); sequence KNRKAAKPKKNKKT.

It belongs to the MAK10 family. As to quaternary structure, component of the N-terminal acetyltransferase C (NatC) complex, which is composed of Naa35, Sbat/Naa38 and Naa30A.

The protein resides in the cytoplasm. Functionally, auxillary component of the N-terminal acetyltransferase C (NatC) complex which catalyzes acetylation of N-terminal methionine residues. The sequence is that of N-alpha-acetyltransferase 35, NatC auxiliary subunit homolog from Drosophila melanogaster (Fruit fly).